We begin with the raw amino-acid sequence, 105 residues long: CRISPR-associated endoribonuclease Cas2 1 (105 aa).

Aspartate 20 lines the Mg(2+) pocket.

It belongs to the CRISPR-associated endoribonuclease Cas2 protein family. In terms of assembly, homodimer, forms a heterotetramer with a Cas1 homodimer. Requires Mg(2+) as cofactor.

CRISPR (clustered regularly interspaced short palindromic repeat), is an adaptive immune system that provides protection against mobile genetic elements (viruses, transposable elements and conjugative plasmids). CRISPR clusters contain sequences complementary to antecedent mobile elements and target invading nucleic acids. CRISPR clusters are transcribed and processed into CRISPR RNA (crRNA). Functions as a ssRNA-specific endoribonuclease. Involved in the integration of spacer DNA into the CRISPR cassette. The polypeptide is CRISPR-associated endoribonuclease Cas2 1 (cas21) (Nitrosomonas europaea (strain ATCC 19718 / CIP 103999 / KCTC 2705 / NBRC 14298)).